The primary structure comprises 132 residues: ATP synthase epsilon chain (132 aa).

It belongs to the ATPase epsilon chain family. F-type ATPases have 2 components, CF(1) - the catalytic core - and CF(0) - the membrane proton channel. CF(1) has five subunits: alpha(3), beta(3), gamma(1), delta(1), epsilon(1). CF(0) has three main subunits: a, b and c.

The protein resides in the cell membrane. Its function is as follows. Produces ATP from ADP in the presence of a proton gradient across the membrane. The chain is ATP synthase epsilon chain (atpC) from Bacillus sp. (strain PS3).